A 249-amino-acid polypeptide reads, in one-letter code: DNA repair protein RecO (249 aa).

It belongs to the RecO family.

In terms of biological role, involved in DNA repair and RecF pathway recombination. The sequence is that of DNA repair protein RecO from Polaromonas sp. (strain JS666 / ATCC BAA-500).